The sequence spans 455 residues: tRNA modification GTPase MnmE (455 aa).

Residues R26, E86, and R125 each contribute to the (6S)-5-formyl-5,6,7,8-tetrahydrofolate site. Positions 222 to 376 (GLKTAIIGRP…VEEKINQIFF (155 aa)) constitute a TrmE-type G domain. Residue N232 participates in K(+) binding. GTP is bound by residues 232–237 (NVGKSS), 251–257 (TDIAGTT), and 276–279 (DTAG). S236 provides a ligand contact to Mg(2+). K(+)-binding residues include T251, I253, and T256. Mg(2+) is bound at residue T257. A (6S)-5-formyl-5,6,7,8-tetrahydrofolate-binding site is contributed by K455.

It belongs to the TRAFAC class TrmE-Era-EngA-EngB-Septin-like GTPase superfamily. TrmE GTPase family. Homodimer. Heterotetramer of two MnmE and two MnmG subunits. It depends on K(+) as a cofactor.

The protein resides in the cytoplasm. Exhibits a very high intrinsic GTPase hydrolysis rate. Involved in the addition of a carboxymethylaminomethyl (cmnm) group at the wobble position (U34) of certain tRNAs, forming tRNA-cmnm(5)s(2)U34. In Lactococcus lactis subsp. cremoris (strain SK11), this protein is tRNA modification GTPase MnmE.